The chain runs to 37 residues: Large ribosomal subunit protein bL36c (37 aa).

Belongs to the bacterial ribosomal protein bL36 family.

It localises to the plastid. Its subcellular location is the chloroplast. In Lactuca sativa (Garden lettuce), this protein is Large ribosomal subunit protein bL36c.